A 450-amino-acid chain; its full sequence is Tyrosine-protein kinase CSK (450 aa).

S2 carries the N-acetylserine modification. Positions 9–70 constitute an SH3 domain; the sequence is PSGTECIAKY…PANYVQKREG (62 aa). The interaction with PTPN22 stretch occupies residues 9–70; it reads PSGTECIAKY…PANYVQKREG (62 aa). Positions 82 to 171 constitute an SH2 domain; it reads WFHGKITREQ…GLCTRLIKPK (90 aa). Y184 is subject to Phosphotyrosine. Residues 195–445 enclose the Protein kinase domain; sequence LKLLQTIGKG…LREQLEHIRT (251 aa). ATP contacts are provided by residues 201–209 and K222; that span reads IGKGEFGDV. Residue Y304 is modified to Phosphotyrosine. Catalysis depends on D314, which acts as the Proton acceptor. S364 is subject to Phosphoserine; by PKA. Y416 is subject to Phosphotyrosine; by autocatalysis.

Belongs to the protein kinase superfamily. Tyr protein kinase family. CSK subfamily. In terms of assembly, homodimer (via SH3-domain). Interacts with PTPN22. Interacts with phosphorylated SIT1, PAG1, LIME1 and TGFB1I1; these interactions serve to recruit CSK to the membrane where it can phosphorylate and inhibit Src-family kinases. Interacts with SRCIN1. Interacts with RHOH. Interacts (via SH2 domain) with SCIMP; this interaction is dependent on phosphorylation of SCIMP 'Tyr-96'. Interacts (via SH2 domain) with PRAG1 (when phosphorylated at 'Tyr-391'); this interaction prevents translocation of CSK from the cytoplasm to the membrane leading to increased activity of CSK. Interacts with LRRK1. Mn(2+) is required as a cofactor. It depends on Mg(2+) as a cofactor. Phosphorylated at Ser-364 by PKA, leading to increased activity. Autophosphorylated. Enriched in lymphoid tissues.

Its subcellular location is the cytoplasm. It localises to the cell membrane. It carries out the reaction L-tyrosyl-[protein] + ATP = O-phospho-L-tyrosyl-[protein] + ADP + H(+). Non-receptor tyrosine-protein kinase that plays an important role in the regulation of cell growth, differentiation, migration and immune response. Phosphorylates tyrosine residues located in the C-terminal tails of Src-family kinases (SFKs) including LCK, SRC, HCK, FYN, LYN, CSK or YES1. Upon tail phosphorylation, Src-family members engage in intramolecular interactions between the phosphotyrosine tail and the SH2 domain that result in an inactive conformation. To inhibit SFKs, CSK is recruited to the plasma membrane via binding to transmembrane proteins or adapter proteins located near the plasma membrane. Suppresses signaling by various surface receptors, including T-cell receptor (TCR) and B-cell receptor (BCR) by phosphorylating and maintaining inactive several positive effectors such as FYN or LCK. The sequence is that of Tyrosine-protein kinase CSK (Csk) from Rattus norvegicus (Rat).